Here is a 644-residue protein sequence, read N- to C-terminus: Exoribonuclease 2 (644 aa).

One can recognise an RNB domain in the interval 189-516 (RQDLTALNFV…NHRLLKAVIK (328 aa)). In terms of domain architecture, S1 motif spans 561–643 (NTRFAAEIID…ETRSIIARPA (83 aa)).

This sequence belongs to the RNR ribonuclease family. RNase II subfamily.

It localises to the cytoplasm. The enzyme catalyses Exonucleolytic cleavage in the 3'- to 5'-direction to yield nucleoside 5'-phosphates.. In terms of biological role, involved in mRNA degradation. Hydrolyzes single-stranded polyribonucleotides processively in the 3' to 5' direction. This chain is Exoribonuclease 2, found in Salmonella typhi.